The following is a 153-amino-acid chain: MALSALRSDSYVDLSQYRDQHFRGNRSDQESLLKQSCTLYVGNLSFYTTEEQIHELFSKSGDVKRIVMGLDKVKKTACGFCFVEYYTRADAEQAMRFINGTRLDDRIVRTDWDAGFKEGRQYGRGKSGGQVRDEYRQDYDAGRGGYGKVVQSF.

MRNA contacts are provided by residues Tyr17, Tyr40, 109–113, 120–124, and 130–131; these read RTDWD, RQYGR, and QV. In terms of domain architecture, RRM spans 37–115; that stretch reads CTLYVGNLSF…RIVRTDWDAG (79 aa).

This sequence belongs to the RRM NCBP2 family. In terms of assembly, component of the nuclear cap-binding complex (CBC), a heterodimer composed of ncbp1/cbp80 and ncbp2/cbp20 that interacts with m7GpppG-capped RNA.

It is found in the nucleus. Its subcellular location is the cytoplasm. Functionally, component of the cap-binding complex (CBC), which binds co-transcriptionally to the 5' cap of pre-mRNAs and is involved in various processes such as pre-mRNA splicing, translation regulation, nonsense-mediated mRNA decay, RNA-mediated gene silencing (RNAi) by microRNAs (miRNAs) and mRNA export. The CBC complex is involved in mRNA export from the nucleus, leading to the recruitment of the mRNA export machinery to the 5' end of mRNA and to mRNA export in a 5' to 3' direction through the nuclear pore. The CBC complex is also involved in mediating U snRNA and intronless mRNAs export from the nucleus. The CBC complex is essential for a pioneer round of mRNA translation, before steady state translation when the CBC complex is replaced by cytoplasmic cap-binding protein eIF4E. The pioneer round of mRNA translation mediated by the CBC complex plays a central role in nonsense-mediated mRNA decay (NMD), NMD only taking place in mRNAs bound to the CBC complex, but not on eIF4E-bound mRNAs. The CBC complex enhances NMD in mRNAs containing at least one exon-junction complex (EJC), promoting the interaction between upf1 and upf2. The CBC complex is also involved in 'failsafe' NMD, which is independent of the EJC complex, while it does not participate in Staufen-mediated mRNA decay (SMD). During cell proliferation, the CBC complex is also involved in microRNAs (miRNAs) biogenesis via its interaction with srrt/ars2, thereby being required for miRNA-mediated RNA interference. The CBC complex also acts as a negative regulator of parn, thereby acting as an inhibitor of mRNA deadenylation. In the CBC complex, ncbp2/cbp20 recognizes and binds capped RNAs (m7GpppG-capped RNA) but requires ncbp1/cbp80 to stabilize the movement of its N-terminal loop and lock the CBC into a high affinity cap-binding state with the cap structure. The conventional cap-binding complex with NCBP2 binds both small nuclear RNA (snRNA) and messenger (mRNA) and is involved in their export from the nucleus. This is Nuclear cap-binding protein subunit 2 (ncbp2) from Xenopus laevis (African clawed frog).